A 97-amino-acid polypeptide reads, in one-letter code: UPF0235 protein DET1292 (97 aa).

Belongs to the UPF0235 family.

In Dehalococcoides mccartyi (strain ATCC BAA-2266 / KCTC 15142 / 195) (Dehalococcoides ethenogenes (strain 195)), this protein is UPF0235 protein DET1292.